Reading from the N-terminus, the 311-residue chain is tRNA-cytidine(32) 2-sulfurtransferase (311 aa).

Positions 47-52 (SGGKDS) match the PP-loop motif motif. The [4Fe-4S] cluster site is built by cysteine 122, cysteine 125, and cysteine 213.

Belongs to the TtcA family. As to quaternary structure, homodimer. Mg(2+) is required as a cofactor. It depends on [4Fe-4S] cluster as a cofactor.

It localises to the cytoplasm. It carries out the reaction cytidine(32) in tRNA + S-sulfanyl-L-cysteinyl-[cysteine desulfurase] + AH2 + ATP = 2-thiocytidine(32) in tRNA + L-cysteinyl-[cysteine desulfurase] + A + AMP + diphosphate + H(+). The protein operates within tRNA modification. Its function is as follows. Catalyzes the ATP-dependent 2-thiolation of cytidine in position 32 of tRNA, to form 2-thiocytidine (s(2)C32). The sulfur atoms are provided by the cysteine/cysteine desulfurase (IscS) system. The sequence is that of tRNA-cytidine(32) 2-sulfurtransferase from Escherichia fergusonii (strain ATCC 35469 / DSM 13698 / CCUG 18766 / IAM 14443 / JCM 21226 / LMG 7866 / NBRC 102419 / NCTC 12128 / CDC 0568-73).